The following is a 212-amino-acid chain: Phosphoribosylformylglycinamidine synthase subunit PurQ (212 aa).

One can recognise a Glutamine amidotransferase type-1 domain in the interval 2 to 212; sequence RIAVLKFPGT…WLGLISWLRR (211 aa). C85 acts as the Nucleophile in catalysis. Active-site residues include H183, E185, and H191.

Part of the FGAM synthase complex composed of 1 PurL, 1 PurQ and 2 PurS subunits.

It is found in the cytoplasm. The catalysed reaction is N(2)-formyl-N(1)-(5-phospho-beta-D-ribosyl)glycinamide + L-glutamine + ATP + H2O = 2-formamido-N(1)-(5-O-phospho-beta-D-ribosyl)acetamidine + L-glutamate + ADP + phosphate + H(+). The enzyme catalyses L-glutamine + H2O = L-glutamate + NH4(+). It functions in the pathway purine metabolism; IMP biosynthesis via de novo pathway; 5-amino-1-(5-phospho-D-ribosyl)imidazole from N(2)-formyl-N(1)-(5-phospho-D-ribosyl)glycinamide: step 1/2. Part of the phosphoribosylformylglycinamidine synthase complex involved in the purines biosynthetic pathway. Catalyzes the ATP-dependent conversion of formylglycinamide ribonucleotide (FGAR) and glutamine to yield formylglycinamidine ribonucleotide (FGAM) and glutamate. The FGAM synthase complex is composed of three subunits. PurQ produces an ammonia molecule by converting glutamine to glutamate. PurL transfers the ammonia molecule to FGAR to form FGAM in an ATP-dependent manner. PurS interacts with PurQ and PurL and is thought to assist in the transfer of the ammonia molecule from PurQ to PurL. This Pyrobaculum aerophilum (strain ATCC 51768 / DSM 7523 / JCM 9630 / CIP 104966 / NBRC 100827 / IM2) protein is Phosphoribosylformylglycinamidine synthase subunit PurQ.